We begin with the raw amino-acid sequence, 552 residues long: Putative lipase ATG15 (552 aa).

Residues 1-26 lie on the Cytoplasmic side of the membrane; it reads MLHITEKEQTRGLRQLEKRGKRLLPP. The helical; Signal-anchor for type II membrane protein transmembrane segment at 27 to 49 threads the bilayer; it reads LIKFIWFCLISAACVAATTFYWL. Over 50–552 the chain is Lumenal; the sequence is RLSPVHNIHK…WRFVSHDDKE (503 aa). Residues N63, N147, N239, N307, and N391 are each glycosylated (N-linked (GlcNAc...) asparagine). The active-site Charge relay system is S409. N526 is a glycosylation site (N-linked (GlcNAc...) asparagine).

The protein belongs to the AB hydrolase superfamily. Lipase family. In terms of assembly, binds to both phosphatidylinositol (PI) and phosphatidylinositol 3,5-bisphosphate (PIP2).

Its subcellular location is the endosome. The protein resides in the multivesicular body membrane. The protein localises to the prevacuolar compartment membrane. It carries out the reaction a triacylglycerol + H2O = a diacylglycerol + a fatty acid + H(+). Lipase which is essential for lysis of subvacuolar cytoplasm to vacuole targeted bodies and intravacuolar autophagic bodies. Involved in the lysis of intravacuolar multivesicular body (MVB) vesicles. The intravacuolar membrane disintegration by ATG15 is critical to life span extension. The chain is Putative lipase ATG15 (ATG15) from Lodderomyces elongisporus (strain ATCC 11503 / CBS 2605 / JCM 1781 / NBRC 1676 / NRRL YB-4239) (Yeast).